The chain runs to 98 residues: Aspartyl/glutamyl-tRNA(Asn/Gln) amidotransferase subunit C (98 aa).

The segment at 75–98 is disordered; that stretch reads AQALSGAPAQEQQRFKVPQILGED.

The protein belongs to the GatC family. In terms of assembly, heterotrimer of A, B and C subunits.

The catalysed reaction is L-glutamyl-tRNA(Gln) + L-glutamine + ATP + H2O = L-glutaminyl-tRNA(Gln) + L-glutamate + ADP + phosphate + H(+). It catalyses the reaction L-aspartyl-tRNA(Asn) + L-glutamine + ATP + H2O = L-asparaginyl-tRNA(Asn) + L-glutamate + ADP + phosphate + 2 H(+). Its function is as follows. Allows the formation of correctly charged Asn-tRNA(Asn) or Gln-tRNA(Gln) through the transamidation of misacylated Asp-tRNA(Asn) or Glu-tRNA(Gln) in organisms which lack either or both of asparaginyl-tRNA or glutaminyl-tRNA synthetases. The reaction takes place in the presence of glutamine and ATP through an activated phospho-Asp-tRNA(Asn) or phospho-Glu-tRNA(Gln). The chain is Aspartyl/glutamyl-tRNA(Asn/Gln) amidotransferase subunit C from Streptomyces griseus subsp. griseus (strain JCM 4626 / CBS 651.72 / NBRC 13350 / KCC S-0626 / ISP 5235).